The primary structure comprises 392 residues: NSSLQVSNKGFSEFSGLRTSSAIPFGRKTNDDLLSVVAFQTSVIGGGNSKRGVVEAKLKVAINGFGRIGRNFLRCWHGRKDSPLDVIAINDTGGVKQASHLLKYDSTLGIFDADVKPVGTDGISVDGKVIQVVSDRNPVNLPWGDLGIDLVIEGTGVFVDREGAGKHIQAGAKKVLITAPGKGDIPTYVVGVNADLYNPDEPIISNASCTTNCLAPFVKVLDQKFGIIKGTMTTTHSYTGDQRLLDASHRDLRRARAAALNIVPTSTGAAKAVALSSQALRGSSMALPLRVPTPNVSVVDLVVQVSKKTFAEEVNAAFREAADKELKGILDVCDEPLVSVDFRCSDVSSTVDASLTMVMGDDMVKVIAWYDNEWGYSQRVVDLADIVANQWK.

The transit peptide at 1–56 directs the protein to the chloroplast; sequence NSSLQVSNKGFSEFSGLRTSSAIPFGRKTNDDLLSVVAFQTSVIGGGNSKRGVVEA. NADP(+)-binding positions include 67–68, Asp91, and Arg136; that span reads RI. D-glyceraldehyde 3-phosphate contacts are provided by residues 208-210, Thr239, Arg254, 267-268, and Arg290; these read SCT and TG. The Nucleophile role is filled by Cys209. Position 372 (Asn372) interacts with NADP(+).

The protein belongs to the glyceraldehyde-3-phosphate dehydrogenase family. As to quaternary structure, tetramer of either four A chains (GAPDH 2) or two A and two B chains (GAPDH 1).

It is found in the plastid. Its subcellular location is the chloroplast. The enzyme catalyses D-glyceraldehyde 3-phosphate + phosphate + NADP(+) = (2R)-3-phospho-glyceroyl phosphate + NADPH + H(+). The protein operates within carbohydrate biosynthesis; Calvin cycle. This chain is Glyceraldehyde-3-phosphate dehydrogenase A, chloroplastic (GAPA), found in Nicotiana tabacum (Common tobacco).